The chain runs to 305 residues: tRNA uridine(34) hydroxylase (305 aa).

A Rhodanese domain is found at 126–220 (SDPEVIVIDT…YLEQIPPEES (95 aa)). The Cysteine persulfide intermediate role is filled by C180.

The protein belongs to the TrhO family.

It catalyses the reaction uridine(34) in tRNA + AH2 + O2 = 5-hydroxyuridine(34) in tRNA + A + H2O. Catalyzes oxygen-dependent 5-hydroxyuridine (ho5U) modification at position 34 in tRNAs. The chain is tRNA uridine(34) hydroxylase from Trichormus variabilis (strain ATCC 29413 / PCC 7937) (Anabaena variabilis).